Consider the following 126-residue polypeptide: Ribosome-binding factor A (126 aa).

The protein belongs to the RbfA family. As to quaternary structure, monomer. Binds 30S ribosomal subunits, but not 50S ribosomal subunits or 70S ribosomes.

The protein resides in the cytoplasm. In terms of biological role, one of several proteins that assist in the late maturation steps of the functional core of the 30S ribosomal subunit. Associates with free 30S ribosomal subunits (but not with 30S subunits that are part of 70S ribosomes or polysomes). Required for efficient processing of 16S rRNA. May interact with the 5'-terminal helix region of 16S rRNA. The polypeptide is Ribosome-binding factor A (Histophilus somni (strain 129Pt) (Haemophilus somnus)).